The following is a 208-amino-acid chain: Thymidylate kinase (208 aa).

ATP is bound at residue 10-17 (GGEGAGKS).

This sequence belongs to the thymidylate kinase family.

The catalysed reaction is dTMP + ATP = dTDP + ADP. Its function is as follows. Phosphorylation of dTMP to form dTDP in both de novo and salvage pathways of dTTP synthesis. The protein is Thymidylate kinase of Alcanivorax borkumensis (strain ATCC 700651 / DSM 11573 / NCIMB 13689 / SK2).